The following is a 1317-amino-acid chain: Putative late blight resistance protein homolog R1B-14 (1317 aa).

Coiled-coil stretches lie at residues 419–442 and 535–556; these read RYSDSLAFLKNQLQVIQTEFESLQ and RMNEEIVGFKDVIENLRNRLLN. An NB-ARC domain is found at 521-823; that stretch reads TVITHTSSQL…SESFIKSSEG (303 aa). Residue 568 to 575 participates in ATP binding; it reads GMPGLGKT. LRR repeat units lie at residues 944-968, 987-1015, 1090-1114, 1138-1161, 1164-1186, and 1187-1211; these read FKFLKVLDLEHQVVIDFIPTELFYL, LWNLETLILKSTPVGRHNTLLLPSTIWDM, PIRLEILKLYRSKAFKTIPFCISAP, LKHLEVLKLCDLEFGDHREWKVSN, FPQLKILKLEYLSLMKWIVADDA, and FPNLEQLVLHGCQDLMEIPSCFMDI. Residues 1251-1317 enclose the HMA domain; that stretch reads IKKMVLKFDI…VSKLRKRGML (67 aa).

This sequence belongs to the disease resistance NB-LRR family.

Its subcellular location is the cytoplasm. The protein localises to the membrane. Functionally, confers resistance to late blight (Phytophthora infestans) races carrying the avirulence gene Avr1. Resistance proteins guard the plant against pathogens that contain an appropriate avirulence protein via an indirect interaction with this avirulence protein. That triggers a defense system including the hypersensitive response, which restricts the pathogen growth. This chain is Putative late blight resistance protein homolog R1B-14 (R1B-14), found in Solanum demissum (Wild potato).